The sequence spans 561 residues: 2-succinyl-5-enolpyruvyl-6-hydroxy-3-cyclohexene-1-carboxylate synthase (561 aa).

Belongs to the TPP enzyme family. MenD subfamily. As to quaternary structure, homodimer. The cofactor is Mg(2+). Requires Mn(2+) as cofactor. Thiamine diphosphate serves as cofactor.

The catalysed reaction is isochorismate + 2-oxoglutarate + H(+) = 5-enolpyruvoyl-6-hydroxy-2-succinyl-cyclohex-3-ene-1-carboxylate + CO2. It participates in quinol/quinone metabolism; 1,4-dihydroxy-2-naphthoate biosynthesis; 1,4-dihydroxy-2-naphthoate from chorismate: step 2/7. Its pathway is quinol/quinone metabolism; menaquinone biosynthesis. Its function is as follows. Catalyzes the thiamine diphosphate-dependent decarboxylation of 2-oxoglutarate and the subsequent addition of the resulting succinic semialdehyde-thiamine pyrophosphate anion to isochorismate to yield 2-succinyl-5-enolpyruvyl-6-hydroxy-3-cyclohexene-1-carboxylate (SEPHCHC). The sequence is that of 2-succinyl-5-enolpyruvyl-6-hydroxy-3-cyclohexene-1-carboxylate synthase from Proteus mirabilis (strain HI4320).